The chain runs to 225 residues: Glutathione S-transferase Mu 5 (225 aa).

The GST N-terminal domain maps to 5–92; the sequence is KSMVLGYWDI…YIARKHNMCG (88 aa). Ser6 is subject to Phosphoserine. Glutathione is bound by residues 11 to 12, 50 to 54, 63 to 64, and 76 to 77; these read YW, WLDVK, NL, and QS. The GST C-terminal domain occupies 94-212; that stretch reads TEEEKIRVDI…QSDRCFKMPI (119 aa). Substrate is bound at residue Tyr120.

Belongs to the GST superfamily. Mu family. In terms of assembly, homodimer. The N-terminus is blocked. As to expression, expressed in testis and brain. Very low expression in liver, kidney, heart and lung.

The protein resides in the cytoplasm. The enzyme catalyses RX + glutathione = an S-substituted glutathione + a halide anion + H(+). Conjugation of reduced glutathione to a wide number of exogenous and endogenous hydrophobic electrophiles. The sequence is that of Glutathione S-transferase Mu 5 (Gstm5) from Rattus norvegicus (Rat).